Consider the following 910-residue polypeptide: Periodic tryptophan protein 2 homolog (910 aa).

WD repeat units lie at residues 12 to 50 (GTVYRDGQVAFSKDGYSVISPIGNKLSIFDLRNNTSKTL), 53 to 92 (DCNYNIKRLSISPSGYHLLASDERGVVHFVHLLSEFKIYT), 94 to 134 (RSNK…KVYN), 144 to 183 (LSSDSLKTIDWSDDANLLVSGGEDRVVRVVGAKDFKNLFI), 188 to 227 (SHKGYIVNCQFMKNSYDMITVCKRGLANVWTCNLRPGELV), 271 to 310 (GKSVDVTAARFHKETNILATAFNNGVIVLHEIPSFALVHN), 313 to 355 (VSEM…YVMK), 358 to 397 (AHSLRITTAEYSPDGSLMATGAEDGKVKIWNSRSSFCTVT), 400 to 439 (EHTSGVTAVKWTQSGRAILSASLDGTVRAHDLKRYRNFRT), 443 to 485 (PEPT…DILS), 486 to 523 (GHESAISSIDIHGNHIVSGSWDRTIKMWTIVDSQAETV), 525 to 563 (VSHEALDVKFSPAGDEIAVLTSDGVITFFEAKEMINLGS), 586 to 625 (AKTKTFTRIRFSPDGNLLLAGGESNNFCLYSVPERMILKK), and 688 to 728 (RPEV…DPFQ). Residues 867–910 (SKKSVKKEEEEEEDVSDESDDEDIEDESAGSDDEDSDDSVEIIE) form a disordered region. Over residues 875–910 (EEEEEDVSDESDDEDIEDESAGSDDEDSDDSVEIIE) the composition is skewed to acidic residues.

The protein belongs to the WD repeat PWP2 family.

The chain is Periodic tryptophan protein 2 homolog from Caenorhabditis elegans.